We begin with the raw amino-acid sequence, 125 residues long: Prefoldin subunit beta (125 aa).

The protein belongs to the prefoldin subunit beta family. Heterohexamer of two alpha and four beta subunits.

The protein localises to the cytoplasm. Its function is as follows. Molecular chaperone capable of stabilizing a range of proteins. Seems to fulfill an ATP-independent, HSP70-like function in archaeal de novo protein folding. The chain is Prefoldin subunit beta from Pyrobaculum calidifontis (strain DSM 21063 / JCM 11548 / VA1).